Reading from the N-terminus, the 305-residue chain is GPI-anchored hemophore cfmA (305 aa).

The N-terminal stretch at 1-18 is a signal peptide; sequence MKASVSLLLLSAASMASA. The region spanning 19-111 is the CFEM domain; it reads AMSVSQCAQM…GSGSGSDSGS (93 aa). 4 cysteine pairs are disulfide-bonded: cysteine 25–cysteine 68, cysteine 29–cysteine 63, cysteine 42–cysteine 49, and cysteine 51–cysteine 84. Aspartate 46 contacts heme. The disordered stretch occupies residues 92-287; the sequence is TATGAGGSSS…STGNVAPRGA (196 aa). The span at 95 to 149 shows a compositional bias: gly residues; it reads GAGGSSSGSGSGSDSGSGSGSGSGSGSGSGSGSGSSSGSGSGSGSGSGSGSGSNS. 3 stretches are compositionally biased toward low complexity: residues 150-186, 196-259, and 267-287; these read GSGS…NSTT, GASS…TATG, and GSAS…PRGA. Residues asparagine 183, asparagine 203, asparagine 237, asparagine 243, and asparagine 275 are each glycosylated (N-linked (GlcNAc...) asparagine). Serine 276 carries the GPI-like-anchor amidated serine lipid modification. Residues 277 to 305 constitute a propeptide, removed in mature form; it reads SSTGNVAPRGAVVGSGAVGALALAALIIL.

It belongs to the RBT5 family. In terms of processing, the GPI-like anchor contains a phosphoceramide lipid group. The GPI-anchor is attached to the protein in the endoplasmic reticulum and serves to target the protein to the cell surface. There, the glucosamine-inositol phospholipid moiety is cleaved off and the GPI-modified mannoprotein is covalently attached via its lipidless GPI glycan remnant to the 1,6-beta-glucan of the outer cell wall layer.

Its subcellular location is the secreted. It is found in the cell wall. The protein resides in the cell membrane. Functionally, GPI-anchored cell wall protein involved in stabilizing the cell wall. Not implicated in virulence, heme uptake and biofilm formation. The chain is GPI-anchored hemophore cfmA from Aspergillus fumigatus (strain ATCC MYA-4609 / CBS 101355 / FGSC A1100 / Af293) (Neosartorya fumigata).